The chain runs to 165 residues: uncharacterized protein (165 aa).

Transmembrane regions (helical) follow at residues 7–27 and 141–161; these read LWLALVLLILSIPAVSAQITV and KGTPGFEAFVAVAVIGSIALL.

The protein resides in the cell membrane. This is an uncharacterized protein from Archaeoglobus fulgidus (strain ATCC 49558 / DSM 4304 / JCM 9628 / NBRC 100126 / VC-16).